The following is a 177-amino-acid chain: Dual-action ribosomal maturation protein DarP (177 aa).

Residues 1-26 (MKIVGDSEHFKQPYDSDEEYVSKTED) form a disordered region.

The protein belongs to the DarP family.

The protein localises to the cytoplasm. Member of a network of 50S ribosomal subunit biogenesis factors which assembles along the 30S-50S interface, preventing incorrect 23S rRNA structures from forming. Promotes peptidyl transferase center (PTC) maturation. The chain is Dual-action ribosomal maturation protein DarP from Shewanella sp. (strain MR-4).